The primary structure comprises 398 residues: CCA-adding enzyme (398 aa).

The ATP site is built by glycine 32 and arginine 35. Positions 32 and 35 each coordinate CTP. The Mg(2+) site is built by aspartate 45 and aspartate 47. Residues arginine 116, aspartate 159, arginine 162, arginine 165, and arginine 168 each contribute to the ATP site. CTP is bound by residues arginine 116, aspartate 159, arginine 162, arginine 165, and arginine 168.

Belongs to the tRNA nucleotidyltransferase/poly(A) polymerase family. Bacterial CCA-adding enzyme type 3 subfamily. In terms of assembly, homodimer. The cofactor is Mg(2+).

The catalysed reaction is a tRNA precursor + 2 CTP + ATP = a tRNA with a 3' CCA end + 3 diphosphate. It catalyses the reaction a tRNA with a 3' CCA end + 2 CTP + ATP = a tRNA with a 3' CCACCA end + 3 diphosphate. Its function is as follows. Catalyzes the addition and repair of the essential 3'-terminal CCA sequence in tRNAs without using a nucleic acid template. Adds these three nucleotides in the order of C, C, and A to the tRNA nucleotide-73, using CTP and ATP as substrates and producing inorganic pyrophosphate. tRNA 3'-terminal CCA addition is required both for tRNA processing and repair. Also involved in tRNA surveillance by mediating tandem CCA addition to generate a CCACCA at the 3' terminus of unstable tRNAs. While stable tRNAs receive only 3'-terminal CCA, unstable tRNAs are marked with CCACCA and rapidly degraded. The chain is CCA-adding enzyme from Lactobacillus gasseri (strain ATCC 33323 / DSM 20243 / BCRC 14619 / CIP 102991 / JCM 1131 / KCTC 3163 / NCIMB 11718 / NCTC 13722 / AM63).